The chain runs to 343 residues: Protein RecA (343 aa).

68–75 (GPESSGKT) provides a ligand contact to ATP.

This sequence belongs to the RecA family.

The protein localises to the cytoplasm. Functionally, can catalyze the hydrolysis of ATP in the presence of single-stranded DNA, the ATP-dependent uptake of single-stranded DNA by duplex DNA, and the ATP-dependent hybridization of homologous single-stranded DNAs. It interacts with LexA causing its activation and leading to its autocatalytic cleavage. The chain is Protein RecA from Syntrophobacter fumaroxidans (strain DSM 10017 / MPOB).